Consider the following 986-residue polypeptide: Translation initiation factor IF-2 (986 aa).

The interval 47-388 (SAPAQTPHKE…RSKGRKGKYE (342 aa)) is disordered. Residues 53-64 (PHKEVSQEEVRV) show a composition bias toward basic and acidic residues. The span at 78-94 (PEAASAEAASAPAAQEE) shows a compositional bias: low complexity. A compositionally biased stretch (basic and acidic residues) spans 95 to 113 (APQKAEPEKVEAEKAEAPK). Low complexity-rich tracts occupy residues 127-141 (EAAP…PAEA) and 153-214 (APVA…QAPA). 2 stretches are compositionally biased toward basic and acidic residues: residues 215–225 (KAEEQEPEKAT) and 268–278 (GVERPGTERPA). A compositionally biased stretch (low complexity) spans 286–300 (PAGAPGRPGERPTTG). Over residues 358-374 (GKKDSFKDILDKRERVF) the composition is skewed to basic and acidic residues. The tr-type G domain occupies 486–653 (KRPPVVTIMG…MVLLQADVLE (168 aa)). The G1 stretch occupies residues 495-502 (GHVDHGKT). 495–502 (GHVDHGKT) is a binding site for GTP. Residues 520-524 (GITQH) form a G2 region. The tract at residues 541–544 (DTPG) is G3. Residues 541–545 (DTPGH) and 595–598 (NKID) contribute to the GTP site. A G4 region spans residues 595-598 (NKID). The interval 631 to 633 (SAK) is G5.

Belongs to the TRAFAC class translation factor GTPase superfamily. Classic translation factor GTPase family. IF-2 subfamily.

It is found in the cytoplasm. Functionally, one of the essential components for the initiation of protein synthesis. Protects formylmethionyl-tRNA from spontaneous hydrolysis and promotes its binding to the 30S ribosomal subunits. Also involved in the hydrolysis of GTP during the formation of the 70S ribosomal complex. This is Translation initiation factor IF-2 from Citrifermentans bemidjiense (strain ATCC BAA-1014 / DSM 16622 / JCM 12645 / Bem) (Geobacter bemidjiensis).